We begin with the raw amino-acid sequence, 217 residues long: Non-structural protein NS3 (217 aa).

It belongs to the orbivirus NS3 family.

Its function is as follows. May play a role in the release of virions from infected cells. The chain is Non-structural protein NS3 (Segment-10) from African horse sickness virus (AHSV).